Reading from the N-terminus, the 77-residue chain is MAVGTTTGELRELTDEELTDKLRESKEELFNLRFQMATGQLANNRRLRVVRQEIARLYTVLRERELGLAAGPGGEDS.

This sequence belongs to the universal ribosomal protein uL29 family.

The chain is Large ribosomal subunit protein uL29 from Mycolicibacterium vanbaalenii (strain DSM 7251 / JCM 13017 / BCRC 16820 / KCTC 9966 / NRRL B-24157 / PYR-1) (Mycobacterium vanbaalenii).